The sequence spans 215 residues: Ras-like GTP-binding protein RHO1 (215 aa).

Residues Ala30, Val31, Gly32, Lys33, Thr34, and Cys35 each contribute to the GTP site. Thr34 provides a ligand contact to Mg(2+). 2 short sequence motifs (switch) span residues Gly43–Phe54 and Asp74–Asp93. Thr52 is a Mg(2+) binding site. GTP contacts are provided by Asp135 and Ser166. Residues Val194–Gln215 are disordered. Residues Thr195–Thr204 are compositionally biased toward low complexity. Basic residues predominate over residues Gln206–Gln215. At Cys212 the chain carries Cysteine methyl ester. Cys212 carries S-geranylgeranyl cysteine lipidation. The propeptide at Leu213–Gln215 is removed in mature form.

This sequence belongs to the small GTPase superfamily. Rho family. In terms of assembly, interacts (GTP-bound form) with formin1 (via GBD/FH3 domain); the interaction activates formin1. Interacts (GTP-bound form) with profilin1. Interacts (GDP-bound form and when prenylated) with RhoGDI. Mg(2+) serves as cofactor.

The protein resides in the cell membrane. It is found in the cytoplasm. Its subcellular location is the cytoskeleton. It localises to the cell projection. The protein localises to the phagocytic cup. The protein resides in the cytoplasmic vesicle. It is found in the phagosome. The enzyme catalyses GTP + H2O = GDP + phosphate + H(+). Its activity is regulated as follows. Regulated by guanine nucleotide exchange factors (GEFs) which promote the exchange of bound GDP for free GTP, GTPase activating proteins (GAPs) which increase the GTP hydrolysis activity and GDP dissociation inhibitors which inhibit the dissociation of the nucleotide from the GTPase. Its function is as follows. Small GTPase which cycles between active GTP-bound and inactive GDP-bound states. Involved in actin cytoskeleton remodeling. Regulates phagocytosis by modulating actin cytoskeleton dynamics through the recruitment of formin1 and profilin1 to the phagocytosis nucleation site. The sequence is that of Ras-like GTP-binding protein RHO1 from Entamoeba histolytica (strain ATCC 30459 / HM-1:IMSS / ABRM).